The primary structure comprises 506 residues: Light-independent protochlorophyllide reductase subunit B (506 aa).

Asp36 contacts [4Fe-4S] cluster. Asp279 functions as the Proton donor in the catalytic mechanism. Residue 414-415 coordinates substrate; that stretch reads GL.

The protein belongs to the ChlB/BchB/BchZ family. Protochlorophyllide reductase is composed of three subunits; BchL, BchN and BchB. Forms a heterotetramer of two BchB and two BchN subunits. The cofactor is [4Fe-4S] cluster.

The enzyme catalyses chlorophyllide a + oxidized 2[4Fe-4S]-[ferredoxin] + 2 ADP + 2 phosphate = protochlorophyllide a + reduced 2[4Fe-4S]-[ferredoxin] + 2 ATP + 2 H2O. It functions in the pathway porphyrin-containing compound metabolism; bacteriochlorophyll biosynthesis (light-independent). Functionally, component of the dark-operative protochlorophyllide reductase (DPOR) that uses Mg-ATP and reduced ferredoxin to reduce ring D of protochlorophyllide (Pchlide) to form chlorophyllide a (Chlide). This reaction is light-independent. The NB-protein (BchN-BchB) is the catalytic component of the complex. In Methylobacterium sp. (strain 4-46), this protein is Light-independent protochlorophyllide reductase subunit B.